We begin with the raw amino-acid sequence, 381 residues long: Alkanesulfonate monooxygenase (381 aa).

This sequence belongs to the SsuD family. In terms of assembly, homotetramer.

It catalyses the reaction an alkanesulfonate + FMNH2 + O2 = an aldehyde + FMN + sulfite + H2O + 2 H(+). In terms of biological role, catalyzes the desulfonation of aliphatic sulfonates. This Escherichia coli O157:H7 protein is Alkanesulfonate monooxygenase.